A 219-amino-acid chain; its full sequence is MFRIHCNKCFRRRNVEPTLIFHMTQCQHVLCASCLSESSTDKKCPLCKRDLRAIPIDKNLPPNVAQYFEDPLRFQQLYRKISKFQADQRASDNLGFYRQMQEHEKNESRLKGFCKMEAQFNQQIQKEKERIAELRAYIKYHEEEGLKEWPHATGVEKPWSNQARGLRPRTPSVTTSDNTQSDEHMTTFCLDSDIDCLEEDEPRRYVKKTFNGNIKDFHI.

The RING-type zinc-finger motif lies at 6–48 (CNKCFRRRNVEPTLIFHMTQCQHVLCASCLSESSTDKKCPLCK). Residues 161–181 (NQARGLRPRTPSVTTSDNTQS) form a disordered region.

May interact with itself, with narya and vilya through its RING-type zinc finger.

In terms of biological role, required for the formation of DNA double-strand breaks together with narya and vilya during the meiotic recombination process. Plays a redundant role with narya in chromosome segregation during female meiosis. The protein is RING finger protein nenya of Drosophila melanogaster (Fruit fly).